A 40-amino-acid chain; its full sequence is Large ribosomal subunit protein bL36A (40 aa).

The protein belongs to the bacterial ribosomal protein bL36 family.

The sequence is that of Large ribosomal subunit protein bL36A from Paenarthrobacter aurescens (strain TC1).